Here is a 338-residue protein sequence, read N- to C-terminus: Ketol-acid reductoisomerase (NADP(+)) (338 aa).

A KARI N-terminal Rossmann domain is found at Met1–Thr181. Residues Tyr24–Gln27, Arg47, and Ser52 each bind NADP(+). The active site involves His107. NADP(+) is bound at residue Gly133. The region spanning Asn182 to Ile327 is the KARI C-terminal knotted domain. Residues Asp190, Glu194, Glu226, and Glu230 each contribute to the Mg(2+) site. Ser251 serves as a coordination point for substrate.

The protein belongs to the ketol-acid reductoisomerase family. Requires Mg(2+) as cofactor.

It catalyses the reaction (2R)-2,3-dihydroxy-3-methylbutanoate + NADP(+) = (2S)-2-acetolactate + NADPH + H(+). The catalysed reaction is (2R,3R)-2,3-dihydroxy-3-methylpentanoate + NADP(+) = (S)-2-ethyl-2-hydroxy-3-oxobutanoate + NADPH + H(+). It participates in amino-acid biosynthesis; L-isoleucine biosynthesis; L-isoleucine from 2-oxobutanoate: step 2/4. It functions in the pathway amino-acid biosynthesis; L-valine biosynthesis; L-valine from pyruvate: step 2/4. In terms of biological role, involved in the biosynthesis of branched-chain amino acids (BCAA). Catalyzes an alkyl-migration followed by a ketol-acid reduction of (S)-2-acetolactate (S2AL) to yield (R)-2,3-dihydroxy-isovalerate. In the isomerase reaction, S2AL is rearranged via a Mg-dependent methyl migration to produce 3-hydroxy-3-methyl-2-ketobutyrate (HMKB). In the reductase reaction, this 2-ketoacid undergoes a metal-dependent reduction by NADPH to yield (R)-2,3-dihydroxy-isovalerate. This is Ketol-acid reductoisomerase (NADP(+)) from Paracidovorax citrulli (strain AAC00-1) (Acidovorax citrulli).